The primary structure comprises 586 residues: Kelch-like protein 7 (586 aa).

The region spanning Cys-44–Ser-111 is the BTB domain. The region spanning Cys-146–Gln-248 is the BACK domain. 6 Kelch repeats span residues Arg-294–Asn-336, Val-337–Gly-382, Lys-383–Gly-430, Leu-431–Asp-481, Ile-483–Ser-528, and Val-530–Asp-575.

As to quaternary structure, homodimer. Component of the BCR(KLHL7) E3 ubiquitin ligase complex.

The protein localises to the nucleus. Its subcellular location is the cytoplasm. It functions in the pathway protein modification; protein ubiquitination. Its function is as follows. Substrate-specific adapter of a BCR (BTB-CUL3-RBX1) E3 ubiquitin ligase complex. The BCR(KLHL7) complex acts by mediating ubiquitination and subsequent degradation of substrate proteins. Probably mediates 'Lys-48'-linked ubiquitination. The polypeptide is Kelch-like protein 7 (KLHL7) (Gallus gallus (Chicken)).